The primary structure comprises 290 residues: Fructose-1,6-bisphosphatase class 1 (290 aa).

Residues glutamate 78, aspartate 96, leucine 98, and aspartate 99 each coordinate Mg(2+). Substrate is bound by residues 99-102 (DGSS), tyrosine 201, and lysine 226. Position 232 (glutamate 232) interacts with Mg(2+).

The protein belongs to the FBPase class 1 family. As to quaternary structure, homotetramer. Mg(2+) is required as a cofactor.

The protein resides in the cytoplasm. It carries out the reaction beta-D-fructose 1,6-bisphosphate + H2O = beta-D-fructose 6-phosphate + phosphate. Its pathway is carbohydrate biosynthesis; gluconeogenesis. The polypeptide is Fructose-1,6-bisphosphatase class 1 (Helicobacter pylori (strain G27)).